A 119-amino-acid chain; its full sequence is Chorion class B protein M2807 (119 aa).

The segment at 1–11 (GGLGGGCGRGF) is left arm. The central domain stretch occupies residues 12–80 (SGGGLPVATA…GNGAVGITRE (69 aa)). Positions 81–119 (GGLGYGAGYGDGYGLGYGGYGGGYGLGYGGYGGCGCGCG) are right arm (Gly-rich tandem repeats).

The protein belongs to the chorion protein family.

Functionally, this protein is one of many from the eggshell of the silk moth. This Bombyx mori (Silk moth) protein is Chorion class B protein M2807.